We begin with the raw amino-acid sequence, 361 residues long: tRNA 2-selenouridine synthase (361 aa).

The region spanning 12–135 (VLKNIPLIDV…FRRYLIDHLE (124 aa)) is the Rhodanese domain. The active-site S-selanylcysteine intermediate is Cys95.

It belongs to the SelU family. In terms of assembly, monomer.

It catalyses the reaction 5-methylaminomethyl-2-thiouridine(34) in tRNA + selenophosphate + (2E)-geranyl diphosphate + H2O + H(+) = 5-methylaminomethyl-2-selenouridine(34) in tRNA + (2E)-thiogeraniol + phosphate + diphosphate. It carries out the reaction 5-methylaminomethyl-2-thiouridine(34) in tRNA + (2E)-geranyl diphosphate = 5-methylaminomethyl-S-(2E)-geranyl-thiouridine(34) in tRNA + diphosphate. The enzyme catalyses 5-methylaminomethyl-S-(2E)-geranyl-thiouridine(34) in tRNA + selenophosphate + H(+) = 5-methylaminomethyl-2-(Se-phospho)selenouridine(34) in tRNA + (2E)-thiogeraniol. The catalysed reaction is 5-methylaminomethyl-2-(Se-phospho)selenouridine(34) in tRNA + H2O = 5-methylaminomethyl-2-selenouridine(34) in tRNA + phosphate. Functionally, involved in the post-transcriptional modification of the uridine at the wobble position (U34) of tRNA(Lys), tRNA(Glu) and tRNA(Gln). Catalyzes the conversion of 2-thiouridine (S2U-RNA) to 2-selenouridine (Se2U-RNA). Acts in a two-step process involving geranylation of 2-thiouridine (S2U) to S-geranyl-2-thiouridine (geS2U) and subsequent selenation of the latter derivative to 2-selenouridine (Se2U) in the tRNA chain. The polypeptide is tRNA 2-selenouridine synthase (Hydrogenovibrio crunogenus (strain DSM 25203 / XCL-2) (Thiomicrospira crunogena)).